Consider the following 329-residue polypeptide: DNA repair protein RAD51 homolog 4 (329 aa).

Positions 1 to 83 (MGMLRAGLCP…ELKTSTAILS (83 aa)) are preferentially binds ssDNA. Positions 4-77 (LRAGLCPGLT…GADLYEELKT (74 aa)) are interaction with XRCC2. An interaction with RAD51C region spans residues 77 to 328 (TSTAILSTGI…EQSPELPGKQ (252 aa)). 107–114 (GGPGSGKT) provides a ligand contact to ATP.

It belongs to the RecA family. RAD51 subfamily. As to quaternary structure, part of the BCDX2 complex consisting of RAD51B, RAD51C, RAD51D and XRCC2; the complex has a ring-like structure arranged into a flat disc around a central channel. In the absence of DNA, the BCDX2 subcomplex XRCC2:RAD51D formed a multimeric ring structure; in the presence of single-stranded DNA it formed a filamentous structure with the ssDNA. Interacts with SWSAP1 and ZSWIM7; involved in homologous recombination repair. Interacts with BLM; required for stimulation of BLM activity by the BCDX2 subcomplex XRCC2:RAD51D. As to expression, highly expressed in brain followed by testis. Also expressed in heart, liver, kidney, spleen, lung and skeletal muscle.

Its subcellular location is the nucleus. The protein resides in the chromosome. It localises to the telomere. In terms of biological role, involved in the homologous recombination repair (HRR) pathway of double-stranded DNA breaks arising during DNA replication or induced by DNA-damaging agents. Bind to single-stranded DNA (ssDNA) and has DNA-dependent ATPase activity. Part of the RAD51 paralog protein complex BCDX2 which acts in the BRCA1-BRCA2-dependent HR pathway. Upon DNA damage, BCDX2 acts downstream of BRCA2 recruitment and upstream of RAD51 recruitment. BCDX2 binds predominantly to the intersection of the four duplex arms of the Holliday junction and to junction of replication forks. The BCDX2 complex was originally reported to bind single-stranded DNA, single-stranded gaps in duplex DNA and specifically to nicks in duplex DNA. Involved in telomere maintenance. The BCDX2 subcomplex XRCC2:RAD51D can stimulate Holliday junction resolution by BLM. This Mus musculus (Mouse) protein is DNA repair protein RAD51 homolog 4 (Rad51d).